Reading from the N-terminus, the 704-residue chain is Meprin A subunit beta (704 aa).

Residues M1 to G20 form the signal peptide. Residues L21 to S64 constitute a propeptide that is removed on maturation. At L21–D654 the chain is on the extracellular side. The 195-residue stretch at N63–T257 folds into the Peptidase M12A domain. 3 disulfides stabilise this stretch: C104/C256, C125/C145, and C266/C428. Residue H153 participates in Zn(2+) binding. E154 is a catalytic residue. Zn(2+) is bound by residues H157 and H163. N-linked (GlcNAc...) asparagine glycans are attached at residues N193, N219, N255, N316, N422, N437, N529, N548, and N593. In terms of domain architecture, MAM spans S261–H430. In terms of domain architecture, MATH spans H431–V586. One can recognise an EGF-like domain in the interval V607–E647. Intrachain disulfides connect C611–C622, C616–C631, and C633–C646. Residues T655–V678 traverse the membrane as a helical segment. At Y679 to F704 the chain is on the cytoplasmic side. T697 carries the post-translational modification Phosphothreonine.

Homotetramer consisting of disulfide-linked beta subunits, or heterotetramer of two alpha and two beta subunits formed by non-covalent association of two disulfide-linked heterodimers. Interacts with MBL2 through its carbohydrate moiety. This interaction may inhibit its catalytic activity. Interacts with TSPAN8. Requires Zn(2+) as cofactor. In terms of processing, proteolytically activated by trypsin in the intestinal lumen and kallikrein-related peptidases in other tissues. Post-translationally, N-glycosylated; contains high mannose and/or complex biantennary structures. Phosphorylated by PKC at multiple sites of its cytoplasmic part. Phosphorylation dcreases activity at the cell surface, leading to diminished substrate cleavage. Isoform 1 is expressed in kidney, intestinal brush borders, and salivary ducts. Isoform 2 has been found in carcinoma cells.

Its subcellular location is the cell membrane. It localises to the secreted. The enzyme catalyses Hydrolysis of proteins, including azocasein, and peptides. Hydrolysis of 5-His-|-Leu-6, 6-Leu-|-Cys-7, 14-Ala-|-Leu-15 and 19-Cys-|-Gly-20 bonds in insulin B chain.. Its activity is regulated as follows. Strongly inhibited by fetuin-A/AHSG. Inhibited by cysteine and by the metal ion chelators EDTA and 1,10-phenanthroline. Not inhibited by 3,4-dichloroisocourmarin, soybean trypsin inhibitor, or the cysteine proteinase inhibitors iodoacetic acid and E-64. Membrane metallopeptidase that sheds many membrane-bound proteins. Exhibits a strong preference for acidic amino acids at the P1' position. Known substrates include: FGF19, VGFA, IL1B, IL18, procollagen I and III, E-cadherin, KLK7, gastrin, ADAM10, tenascin-C. The presence of several pro-inflammatory cytokine among substrates implicate MEP1B in inflammation. It is also involved in tissue remodeling due to its capability to degrade extracellular matrix components. In Mus musculus (Mouse), this protein is Meprin A subunit beta (Mep1b).